Here is a 330-residue protein sequence, read N- to C-terminus: 3'-5' exonuclease (330 aa).

The segment at 1–92 (MDQYLIKMST…DGTPSPEKEI (92 aa)) is disordered. 2 stretches are compositionally biased toward basic and acidic residues: residues 27–39 (NTTR…KEKI) and 48–66 (KDTP…ENPP). A phosphoserine mark is found at serine 79 and serine 87. Residues 117–289 (SADEVMQWVE…IGQVIYRDIE (173 aa)) form the 3'-5' exonuclease domain. Mg(2+)-binding residues include aspartate 139, glutamate 141, and aspartate 277.

It belongs to the WRNexo family.

The protein resides in the nucleus. Functionally, has exonuclease activity on both single-stranded and duplex templates bearing overhangs, but not blunt ended duplex DNA, and cleaves in a 3'-5' direction. Essential for the formation of DNA replication focal centers. Has an important role in maintaining genome stability. The chain is 3'-5' exonuclease from Drosophila virilis (Fruit fly).